Here is a 288-residue protein sequence, read N- to C-terminus: Programmed cell death protein 1 (288 aa).

The first 24 residues, 1 to 24 (MWVRQVPWSFTWAVLQLSWQSGWL), serve as a signal peptide directing secretion. The Extracellular portion of the chain corresponds to 25 to 169 (LEVPNGPWRS…PKPEGRFQGM (145 aa)). Residues 31–139 (PWRSLTFYPA…PKAKIEESPG (109 aa)) form the Ig-like V-type domain. 4 N-linked (GlcNAc...) asparagine glycosylation sites follow: Asn-49, Asn-58, Asn-74, and Asn-116. Cys-54 and Cys-123 are joined by a disulfide. The tract at residues 70–77 (LSPSNQTE) is interaction with CD274/PDCD1L1. The helical transmembrane segment at 170 to 190 (VIGIMSALVGIPVLLLLAWAL) threads the bilayer. The Cytoplasmic portion of the chain corresponds to 191–288 (AVFCSTSMSE…HEDGHCSWPL (98 aa)). An ITIM motif motif is present at residues 223-228 (VAYEEL). The residue at position 225 (Tyr-225) is a Phosphotyrosine. A Glycyl lysine isopeptide (Lys-Gly) (interchain with G-Cter in ubiquitin) cross-link involves residue Lys-235. A Phosphothreonine; by MAPK3 modification is found at Thr-236. The ITSM motif signature appears at 247–251 (EYATI). Residue Tyr-248 is modified to Phosphotyrosine. The segment at 263-288 (GRRGSADGLQGPRPPRHEDGHCSWPL) is disordered. Basic and acidic residues predominate over residues 277-288 (PRHEDGHCSWPL).

In terms of assembly, monomer. Interacts with CD274/PDCD1L1. Interacts with CD273/PDCD1LG2. Interacts with FBXO38; leading to ubiquitination and degradation by the proteasome. In terms of processing, ubiquitinated at Lys-235 by the SCF(FBXO38) complex, leading to its proteasomal degradation. Ubiquitinated via 'Lys-48'-linked polyubiquitin chains. Deubiquitinated and thus stabilized by USP5. Post-translationally, tyrosine phosphorylated at Tyr-225 (within ITIM motif) and Tyr-248 (ITSM motif) upon ligand binding. Phosphorylation at Tyr-248 promotes the recruitment of the protein tyrosine phosphatase PTPN11/SHP-2 that mediates dephosphorylation of key TCR proximal signaling molecules, such as ZAP70, PRKCQ/PKCtheta and CD247/CD3zeta. Phosphorylation at Thr-236 promotes the recruitment of the deubiquitinase USP5. As to expression, thymus-specific.

Its subcellular location is the cell membrane. Inhibitory receptor on antigen activated T-cells that plays a critical role in induction and maintenance of immune tolerance to self. Delivers inhibitory signals upon binding to ligands, such as CD274/PDCD1L1 and CD273/PDCD1LG2. Following T-cell receptor (TCR) engagement, PDCD1 associates with CD3-TCR in the immunological synapse and directly inhibits T-cell activation. Suppresses T-cell activation through the recruitment of PTPN11/SHP-2: following ligand-binding, PDCD1 is phosphorylated within the ITSM motif, leading to the recruitment of the protein tyrosine phosphatase PTPN11/SHP-2 that mediates dephosphorylation of key TCR proximal signaling molecules, such as ZAP70, PRKCQ/PKCtheta and CD247/CD3zeta. The PDCD1-mediated inhibitory pathway is exploited by tumors to attenuate anti-tumor immunity and facilitate tumor survival. The protein is Programmed cell death protein 1 of Mus musculus (Mouse).